The sequence spans 227 residues: Enolase-phosphatase E1 (227 aa).

The protein belongs to the HAD-like hydrolase superfamily. MasA/MtnC family. Monomer. Mg(2+) serves as cofactor.

The catalysed reaction is 5-methylsulfanyl-2,3-dioxopentyl phosphate + H2O = 1,2-dihydroxy-5-(methylsulfanyl)pent-1-en-3-one + phosphate. It functions in the pathway amino-acid biosynthesis; L-methionine biosynthesis via salvage pathway; L-methionine from S-methyl-5-thio-alpha-D-ribose 1-phosphate: step 3/6. Its pathway is amino-acid biosynthesis; L-methionine biosynthesis via salvage pathway; L-methionine from S-methyl-5-thio-alpha-D-ribose 1-phosphate: step 4/6. Its function is as follows. Bifunctional enzyme that catalyzes the enolization of 2,3-diketo-5-methylthiopentyl-1-phosphate (DK-MTP-1-P) into the intermediate 2-hydroxy-3-keto-5-methylthiopentenyl-1-phosphate (HK-MTPenyl-1-P), which is then dephosphorylated to form the acireductone 1,2-dihydroxy-3-keto-5-methylthiopentene (DHK-MTPene). The protein is Enolase-phosphatase E1 of Persephonella marina (strain DSM 14350 / EX-H1).